A 378-amino-acid polypeptide reads, in one-letter code: Anhydro-N-acetylmuramic acid kinase (378 aa).

9–16 (GTSADGID) is a binding site for ATP.

This sequence belongs to the anhydro-N-acetylmuramic acid kinase family.

The enzyme catalyses 1,6-anhydro-N-acetyl-beta-muramate + ATP + H2O = N-acetyl-D-muramate 6-phosphate + ADP + H(+). Its pathway is amino-sugar metabolism; 1,6-anhydro-N-acetylmuramate degradation. The protein operates within cell wall biogenesis; peptidoglycan recycling. In terms of biological role, catalyzes the specific phosphorylation of 1,6-anhydro-N-acetylmuramic acid (anhMurNAc) with the simultaneous cleavage of the 1,6-anhydro ring, generating MurNAc-6-P. Is required for the utilization of anhMurNAc either imported from the medium or derived from its own cell wall murein, and thus plays a role in cell wall recycling. This Prochlorococcus marinus (strain NATL1A) protein is Anhydro-N-acetylmuramic acid kinase.